Here is a 449-residue protein sequence, read N- to C-terminus: Glycine--tRNA ligase (449 aa).

Substrate contacts are provided by arginine 100 and glutamate 158. Residues 190-192 (RNE), 200-205 (FRVREF), 275-276 (EL), and 319-322 (GIER) each bind ATP. 205–209 (FEQFE) contacts substrate. 315-319 (EPSVG) lines the substrate pocket.

This sequence belongs to the class-II aminoacyl-tRNA synthetase family. As to quaternary structure, homodimer.

The protein resides in the cytoplasm. It carries out the reaction tRNA(Gly) + glycine + ATP = glycyl-tRNA(Gly) + AMP + diphosphate. Functionally, catalyzes the attachment of glycine to tRNA(Gly). The chain is Glycine--tRNA ligase from Mycoplasma pneumoniae (strain ATCC 29342 / M129 / Subtype 1) (Mycoplasmoides pneumoniae).